Reading from the N-terminus, the 421-residue chain is F-box/kelch-repeat protein At1g26930 (421 aa).

The disordered stretch occupies residues 54 to 73; the sequence is TDSSEGEDNGSSSDSGTLIP. The F-box domain occupies 70–117; the sequence is TLIPGMNRDDSLSCLIRCSRADYCSIASVNRSLRSLIRSGEIYRLRRL. Kelch repeat units lie at residues 114–167, 169–212, 213–260, 261–312, and 320–366; these read LRRL…LAVG, DLLV…SYGE, IAVL…FMDG, KFYV…MSAA, and AVVN…GLAF.

This is F-box/kelch-repeat protein At1g26930 from Arabidopsis thaliana (Mouse-ear cress).